The primary structure comprises 325 residues: Casein kinase I isoform alpha (325 aa).

Position 2 is an N-acetylalanine (Ala2). Ser4 is modified (phosphoserine). Lys8 bears the N6-acetyllysine mark. A Protein kinase domain is found at 17–285; the sequence is YKLVRKIGSG…YLRQLFRILF (269 aa). Residues 23 to 31 and Lys46 contribute to the ATP site; that span reads IGSGSFGDI. Catalysis depends on Asp136, which acts as the Proton acceptor. Residue Ile156 is modified to Phosphoserine.

This sequence belongs to the protein kinase superfamily. CK1 Ser/Thr protein kinase family. Casein kinase I subfamily. Interacts with the Axin complex. Interacts with TUT1, leading to TUT1 phosphorylation. Interacts with FAM83A, FAM83B, FAM83C, FAM83D, FAM83E, FAM83F, FAM83G and FAM83H (via DUF1669). Interaction with FAM83H recruits CSNK1A1 to keratin filaments. In terms of processing, phosphorylated by MTOR in response to mitogenic stimulation, leading to its activation.

Its subcellular location is the cytoplasm. The protein localises to the cytoskeleton. It is found in the microtubule organizing center. The protein resides in the centrosome. It localises to the chromosome. Its subcellular location is the centromere. The protein localises to the kinetochore. It is found in the nucleus speckle. The protein resides in the cilium basal body. It localises to the spindle. The enzyme catalyses L-seryl-[protein] + ATP = O-phospho-L-seryl-[protein] + ADP + H(+). It carries out the reaction L-threonyl-[protein] + ATP = O-phospho-L-threonyl-[protein] + ADP + H(+). In terms of biological role, casein kinases are operationally defined by their preferential utilization of acidic proteins such as caseins as substrates. Can phosphorylate a large number of proteins. Participates in Wnt signaling. Phosphorylates CTNNB1 at 'Ser-45'. May phosphorylate PER1 and PER2. May play a role in segregating chromosomes during mitosis. May play a role in keratin cytoskeleton disassembly and thereby, it may regulate epithelial cell migration. Acts as a positive regulator of mTORC1 and mTORC2 signaling in response to nutrients by mediating phosphorylation of DEPTOR inhibitor. Acts as an inhibitor of NLRP3 inflammasome assembly by mediating phosphorylation of NLRP3. This chain is Casein kinase I isoform alpha (Csnk1a1), found in Rattus norvegicus (Rat).